A 101-amino-acid chain; its full sequence is Protein Tat (101 aa).

Residues 1-24 form an interaction with human CREBBP region; that stretch reads MDPVDPKLEPWNHPGSQPTTPCNK. The tract at residues 1–48 is transactivation; sequence MDPVDPKLEPWNHPGSQPTTPCNKCYCKVCCWHCQVCFLNKGLGISYG. Zn(2+)-binding residues include Cys22, Cys25, and Cys27. The cysteine-rich stretch occupies residues 22 to 37; it reads CNKCYCKVCCWHCQVC. The residue at position 28 (Lys28) is an N6-acetyllysine; by host PCAF. Positions 30, 33, 34, and 37 each coordinate Zn(2+). A core region spans residues 38–48; sequence FLNKGLGISYG. The interval 48 to 101 is disordered; the sequence is GRKKRRPRRGTPQGSKDHQNPVPKQPLPITSGNPTGSEKPKKEVASKTETDPLD. Residues 49-57 carry the Nuclear localization signal, RNA-binding (TAR), and protein transduction motif; sequence RKKRRPRRG. The interval 49-86 is interaction with the host capping enzyme RNGTT; that stretch reads RKKRRPRRGTPQGSKDHQNPVPKQPLPITSGNPTGSEK. 2 positions are modified to N6-acetyllysine; by host EP300 and GCN5L2: Lys50 and Lys51. Asymmetric dimethylarginine; by host PRMT6 is present on residues Arg52 and Arg53. Lys71 is covalently cross-linked (Glycyl lysine isopeptide (Lys-Gly) (interchain with G-Cter in ubiquitin)). The span at 85–101 shows a compositional bias: basic and acidic residues; that stretch reads EKPKKEVASKTETDPLD.

This sequence belongs to the lentiviruses Tat family. Interacts with host CCNT1. Associates with the P-TEFb complex composed at least of Tat, P-TEFb (CDK9 and CCNT1), TAR RNA, RNA Pol II. Recruits the HATs CREBBP, TAF1/TFIID, EP300, PCAF and GCN5L2. Interacts with host KAT5/Tip60; this interaction targets the latter to degradation. Interacts with the host deacetylase SIRT1. Interacts with host capping enzyme RNGTT; this interaction stimulates RNGTT. Binds to host KDR, and to the host integrins ITGAV/ITGB3 and ITGA5/ITGB1. Interacts with host KPNB1/importin beta-1 without previous binding to KPNA1/importin alpha-1. Interacts with EIF2AK2. Interacts with host nucleosome assembly protein NAP1L1; this interaction may be required for the transport of Tat within the nucleus, since the two proteins interact at the nuclear rim. Interacts with host C1QBP/SF2P32; this interaction involves lysine-acetylated Tat. Interacts with the host chemokine receptors CCR2, CCR3 and CXCR4. Interacts with host DPP4/CD26; this interaction may trigger an anti-proliferative effect. Interacts with host LDLR. Interacts with the host extracellular matrix metalloproteinase MMP1. Interacts with host PRMT6; this interaction mediates Tat's methylation. Interacts with, and is ubiquitinated by MDM2/Hdm2. Interacts with host PSMC3 and HTATIP2. Interacts with STAB1; this interaction may overcome SATB1-mediated repression of IL2 and IL2RA (interleukin) in T cells by binding to the same domain than HDAC1. Interacts (when acetylated) with human CDK13, thereby increasing HIV-1 mRNA splicing and promoting the production of the doubly spliced HIV-1 protein Nef. Interacts with host TBP; this interaction modulates the activity of transcriptional pre-initiation complex. Interacts with host RELA. Interacts with host PLSCR1; this interaction negatively regulates Tat transactivation activity by altering its subcellular distribution. Asymmetrical arginine methylation by host PRMT6 seems to diminish the transactivation capacity of Tat and affects the interaction with host CCNT1. In terms of processing, acetylation by EP300, CREBBP, GCN5L2/GCN5 and PCAF regulates the transactivation activity of Tat. EP300-mediated acetylation of Lys-50 promotes dissociation of Tat from the TAR RNA through the competitive binding to PCAF's bromodomain. In addition, the non-acetylated Tat's N-terminus can also interact with PCAF. PCAF-mediated acetylation of Lys-28 enhances Tat's binding to CCNT1. Lys-50 is deacetylated by SIRT1. Post-translationally, polyubiquitination by host MDM2 does not target Tat to degradation, but activates its transactivation function and fosters interaction with CCNT1 and TAR RNA. Phosphorylated by EIF2AK2 on serine and threonine residues adjacent to the basic region important for TAR RNA binding and function. Phosphorylation of Tat by EIF2AK2 is dependent on the prior activation of EIF2AK2 by dsRNA.

Its subcellular location is the host nucleus. The protein resides in the host nucleolus. The protein localises to the host cytoplasm. It is found in the secreted. In terms of biological role, transcriptional activator that increases RNA Pol II processivity, thereby increasing the level of full-length viral transcripts. Recognizes a hairpin structure at the 5'-LTR of the nascent viral mRNAs referred to as the transactivation responsive RNA element (TAR) and recruits the cyclin T1-CDK9 complex (P-TEFb complex) that will in turn hyperphosphorylate the RNA polymerase II to allow efficient elongation. The CDK9 component of P-TEFb and other Tat-activated kinases hyperphosphorylate the C-terminus of RNA Pol II that becomes stabilized and much more processive. Other factors such as HTATSF1/Tat-SF1, SUPT5H/SPT5, and HTATIP2 are also important for Tat's function. Besides its effect on RNA Pol II processivity, Tat induces chromatin remodeling of proviral genes by recruiting the histone acetyltransferases (HATs) CREBBP, EP300 and PCAF to the chromatin. This also contributes to the increase in proviral transcription rate, especially when the provirus integrates in transcriptionally silent region of the host genome. To ensure maximal activation of the LTR, Tat mediates nuclear translocation of NF-kappa-B by interacting with host RELA. Through its interaction with host TBP, Tat may also modulate transcription initiation. Tat can reactivate a latently infected cell by penetrating in it and transactivating its LTR promoter. In the cytoplasm, Tat is thought to act as a translational activator of HIV-1 mRNAs. Its function is as follows. Extracellular circulating Tat can be endocytosed by surrounding uninfected cells via the binding to several surface receptors such as CD26, CXCR4, heparan sulfate proteoglycans (HSPG) or LDLR. Neurons are rarely infected, but they internalize Tat via their LDLR. Through its interaction with nuclear HATs, Tat is potentially able to control the acetylation-dependent cellular gene expression. Modulates the expression of many cellular genes involved in cell survival, proliferation or in coding for cytokines or cytokine receptors. Tat plays a role in T-cell and neurons apoptosis. Tat induced neurotoxicity and apoptosis probably contribute to neuroAIDS. Circulating Tat also acts as a chemokine-like and/or growth factor-like molecule that binds to specific receptors on the surface of the cells, affecting many cellular pathways. In the vascular system, Tat binds to ITGAV/ITGB3 and ITGA5/ITGB1 integrins dimers at the surface of endothelial cells and competes with bFGF for heparin-binding sites, leading to an excess of soluble bFGF. In Homo sapiens (Human), this protein is Protein Tat.